The sequence spans 110 residues: IQ domain-containing protein J (110 aa).

Positions 47-67 (ESKVKIIQRAWREYLQRQDPL) constitute an IQ domain. Positions 63 to 99 (RQDPLEKRSPSPPSVSSDKLSSSVSMNTFSDSSTPVS) are disordered. A compositionally biased stretch (low complexity) spans 76–87 (SVSSDKLSSSVS). A compositionally biased stretch (polar residues) spans 88 to 99 (MNTFSDSSTPVS).

The protein is IQ domain-containing protein J of Mus musculus (Mouse).